The primary structure comprises 83 residues: Exodeoxyribonuclease 7 small subunit (83 aa).

It belongs to the XseB family. As to quaternary structure, heterooligomer composed of large and small subunits.

The protein localises to the cytoplasm. The enzyme catalyses Exonucleolytic cleavage in either 5'- to 3'- or 3'- to 5'-direction to yield nucleoside 5'-phosphates.. In terms of biological role, bidirectionally degrades single-stranded DNA into large acid-insoluble oligonucleotides, which are then degraded further into small acid-soluble oligonucleotides. The chain is Exodeoxyribonuclease 7 small subunit from Allorhizobium ampelinum (strain ATCC BAA-846 / DSM 112012 / S4) (Agrobacterium vitis (strain S4)).